Reading from the N-terminus, the 66-residue chain is Opicalcin-2 (66 aa).

The N-terminal stretch at 1–22 is a signal peptide; the sequence is MKPSLIIVTFIVVFMTISCVAA. A propeptide spanning residues 23 to 31 is cleaved from the precursor; sequence DDEQETWIE. Disulfide bonds link Cys-36–Cys-50, Cys-43–Cys-54, and Cys-49–Cys-65. The essential for stimulation of [3H]ryanodine binding to RYR1 stretch occupies residues 55–57; it reads KRR.

Belongs to the scorpion calcin family. Expressed by the venom gland.

It is found in the secreted. Functionally, this toxin stabilizes ryanodine receptor 1 (RyR1) opening in a long-lasting subconductance state (40% of the full conductance state). Furthermore, it triggers calcium release from sarcoplasmic vesicles (64.2 nM are enough to induce a sharp release, and 50% of the total calcium is released after toxin (100 nM) addition) probably by acting as a cell-penetrating peptide (CPP). In addition, it has been shown to dose-dependently stimulate ryanodine binding to RyR1 (EC(50)=3.2 nM). It also augments the bell-shaped calcium-[3H]ryanodine binding curve that is maximal at about 10 uM calcium concentration. It binds a different site as ryanodine. It acts synergistically with caffeine. In vivo, intracerebroventricular injection into mice induces neurotoxic symptoms, followed by death. The chain is Opicalcin-2 from Opistophthalmus carinatus (African yellow leg scorpion).